Consider the following 217-residue polypeptide: Pyrophosphatase PpaX (217 aa).

Asp-11 functions as the Nucleophile in the catalytic mechanism.

Belongs to the HAD-like hydrolase superfamily. PpaX family. Mg(2+) is required as a cofactor.

It catalyses the reaction diphosphate + H2O = 2 phosphate + H(+). In terms of biological role, hydrolyzes pyrophosphate formed during P-Ser-HPr dephosphorylation by HPrK/P. Might play a role in controlling the intracellular pyrophosphate pool. The polypeptide is Pyrophosphatase PpaX (Listeria welshimeri serovar 6b (strain ATCC 35897 / DSM 20650 / CCUG 15529 / CIP 8149 / NCTC 11857 / SLCC 5334 / V8)).